The primary structure comprises 64 residues: Small ribosomal subunit protein eS17 (64 aa).

Belongs to the eukaryotic ribosomal protein eS17 family.

The polypeptide is Small ribosomal subunit protein eS17 (Methanocorpusculum labreanum (strain ATCC 43576 / DSM 4855 / Z)).